A 399-amino-acid chain; its full sequence is Elongation factor Tu (399 aa).

Residues 10-209 (KPHVNIGTIG…AVDSYIPTPK (200 aa)) form the tr-type G domain. The interval 19–26 (GHVDHGKT) is G1. 19–26 (GHVDHGKT) serves as a coordination point for GTP. Threonine 26 lines the Mg(2+) pocket. The interval 60 to 64 (GITIA) is G2. Residues 81–84 (DCPG) are G3. GTP is bound by residues 81 to 85 (DCPGH) and 136 to 139 (NKTD). Positions 136–139 (NKTD) are G4. A G5 region spans residues 174–176 (SAL).

It belongs to the TRAFAC class translation factor GTPase superfamily. Classic translation factor GTPase family. EF-Tu/EF-1A subfamily. In terms of assembly, monomer.

Its subcellular location is the cytoplasm. It catalyses the reaction GTP + H2O = GDP + phosphate + H(+). Its function is as follows. GTP hydrolase that promotes the GTP-dependent binding of aminoacyl-tRNA to the A-site of ribosomes during protein biosynthesis. This is Elongation factor Tu from Campylobacter hominis (strain ATCC BAA-381 / DSM 21671 / CCUG 45161 / LMG 19568 / NCTC 13146 / CH001A).